Consider the following 189-residue polypeptide: UPF0398 protein lp_1753 (189 aa).

This sequence belongs to the UPF0398 family.

This chain is UPF0398 protein lp_1753, found in Lactiplantibacillus plantarum (strain ATCC BAA-793 / NCIMB 8826 / WCFS1) (Lactobacillus plantarum).